Consider the following 196-residue polypeptide: ATP-dependent Clp protease proteolytic subunit (196 aa).

S98 serves as the catalytic Nucleophile. Residue H123 is part of the active site.

Belongs to the peptidase S14 family. In terms of assembly, fourteen ClpP subunits assemble into 2 heptameric rings which stack back to back to give a disk-like structure with a central cavity, resembling the structure of eukaryotic proteasomes.

The protein localises to the cytoplasm. The enzyme catalyses Hydrolysis of proteins to small peptides in the presence of ATP and magnesium. alpha-casein is the usual test substrate. In the absence of ATP, only oligopeptides shorter than five residues are hydrolyzed (such as succinyl-Leu-Tyr-|-NHMec, and Leu-Tyr-Leu-|-Tyr-Trp, in which cleavage of the -Tyr-|-Leu- and -Tyr-|-Trp bonds also occurs).. Cleaves peptides in various proteins in a process that requires ATP hydrolysis. Has a chymotrypsin-like activity. Plays a major role in the degradation of misfolded proteins. This is ATP-dependent Clp protease proteolytic subunit from Sulfurimonas denitrificans (strain ATCC 33889 / DSM 1251) (Thiomicrospira denitrificans (strain ATCC 33889 / DSM 1251)).